Consider the following 97-residue polypeptide: Glutamyl-tRNA(Gln) amidotransferase subunit C (97 aa).

It belongs to the GatC family. In terms of assembly, heterotrimer of A, B and C subunits.

The catalysed reaction is L-glutamyl-tRNA(Gln) + L-glutamine + ATP + H2O = L-glutaminyl-tRNA(Gln) + L-glutamate + ADP + phosphate + H(+). It catalyses the reaction L-aspartyl-tRNA(Asn) + L-glutamine + ATP + H2O = L-asparaginyl-tRNA(Asn) + L-glutamate + ADP + phosphate + 2 H(+). Its function is as follows. Allows the formation of correctly charged Asn-tRNA(Asn) or Gln-tRNA(Gln) through the transamidation of misacylated Asp-tRNA(Asn) or Glu-tRNA(Gln) in organisms which lack either or both of asparaginyl-tRNA or glutaminyl-tRNA synthetases. The reaction takes place in the presence of glutamine and ATP through an activated phospho-Asp-tRNA(Asn) or phospho-Glu-tRNA(Gln). The protein is Glutamyl-tRNA(Gln) amidotransferase subunit C of Saccharolobus solfataricus (strain ATCC 35092 / DSM 1617 / JCM 11322 / P2) (Sulfolobus solfataricus).